A 489-amino-acid chain; its full sequence is DNA-directed RNA polymerase subunit beta' C-terminal section (489 aa).

Mg(2+) is bound by residues aspartate 208, aspartate 210, and aspartate 212.

This sequence belongs to the RNA polymerase beta' chain family. RpoC1 subfamily. In terms of assembly, in plastids the minimal PEP RNA polymerase catalytic core is composed of four subunits: alpha, beta, beta', and beta''. When a (nuclear-encoded) sigma factor is associated with the core the holoenzyme is formed, which can initiate transcription. Requires Mg(2+) as cofactor.

It localises to the plastid. Its subcellular location is the chloroplast. The catalysed reaction is RNA(n) + a ribonucleoside 5'-triphosphate = RNA(n+1) + diphosphate. In terms of biological role, DNA-dependent RNA polymerase catalyzes the transcription of DNA into RNA using the four ribonucleoside triphosphates as substrates. The protein is DNA-directed RNA polymerase subunit beta' C-terminal section (rpoC1B) of Chlamydomonas reinhardtii (Chlamydomonas smithii).